The sequence spans 261 residues: Flagellar L-ring protein (261 aa).

A signal peptide spans 1–15 (MKRLLCLLLLTTLTG). Cysteine 16 carries N-palmitoyl cysteine lipidation. A lipid anchor (S-diacylglycerol cysteine) is attached at cysteine 16. The segment covering 121–133 (KSADAELSKKNDS) has biased composition (basic and acidic residues). The tract at residues 121 to 140 (KSADAELSKKNDSSMDPLQV) is disordered.

Belongs to the FlgH family. The basal body constitutes a major portion of the flagellar organelle and consists of four rings (L,P,S, and M) mounted on a central rod.

The protein resides in the cell outer membrane. It is found in the bacterial flagellum basal body. Its function is as follows. Assembles around the rod to form the L-ring and probably protects the motor/basal body from shearing forces during rotation. The chain is Flagellar L-ring protein from Aliivibrio salmonicida (strain LFI1238) (Vibrio salmonicida (strain LFI1238)).